The primary structure comprises 109 residues: uncharacterized protein (109 aa).

Positions 63–109 (DPSTWEPEEHETEHCRGHTLPEKKQKPQGGHGSDKDEDKGNCGCDHC) are disordered. Basic and acidic residues-rich tracts occupy residues 73-87 (ETEH…EKKQ) and 94-109 (GSDK…CDHC).

This is an uncharacterized protein from Caenorhabditis elegans.